Reading from the N-terminus, the 484-residue chain is Sushi domain-containing protein 4 (484 aa).

A signal peptide spans 1-35; that stretch reads MFHHADKGGKKSAFGHPVCGQIILSIILLRPPLLV. 4 Sushi domains span residues 46–110, 111–168, 169–230, and 232–295; these read QICK…VCLS, EDCL…QPTC, QGCL…RCLD, and EACS…YCVK. Disulfide bonds link Cys48–Cys90, Cys76–Cys108, Cys113–Cys156, Cys138–Cys168, Cys171–Cys215, Cys201–Cys228, Cys234–Cys280, and Cys265–Cys293. N-linked (GlcNAc...) asparagine glycosylation is found at Asn95 and Asn125. A glycan (N-linked (GlcNAc...) asparagine) is linked at Asn183. Residues 311–331 form a helical membrane-spanning segment; the sequence is WKVVACTATSVLLALLLVITA. The segment at 374-484 is disordered; it reads SGNYCQPPND…PLVEDGEEDC (111 aa). Composition is skewed to polar residues over residues 424 to 442 and 449 to 467; these read DSLSDTSECLQGLQPSSSH and SEKTNAITSMEETASTSPS. The segment covering 470-484 has biased composition (acidic residues); it reads IADEIPLVEDGEEDC.

The protein resides in the membrane. This chain is Sushi domain-containing protein 4 (susd4), found in Danio rerio (Zebrafish).